The following is a 274-amino-acid chain: Large ribosomal subunit protein uL2 (274 aa).

Disordered regions lie at residues 28–55 (APHA…RHVG) and 224–274 (VAMN…RRRK).

This sequence belongs to the universal ribosomal protein uL2 family. As to quaternary structure, part of the 50S ribosomal subunit. Forms a bridge to the 30S subunit in the 70S ribosome.

In terms of biological role, one of the primary rRNA binding proteins. Required for association of the 30S and 50S subunits to form the 70S ribosome, for tRNA binding and peptide bond formation. It has been suggested to have peptidyltransferase activity; this is somewhat controversial. Makes several contacts with the 16S rRNA in the 70S ribosome. The polypeptide is Large ribosomal subunit protein uL2 (Pseudomonas putida (strain W619)).